Here is a 585-residue protein sequence, read N- to C-terminus: Arginine--tRNA ligase (585 aa).

Residues 131-141 (ANPTGPMHVGH) carry the 'HIGH' region motif.

This sequence belongs to the class-I aminoacyl-tRNA synthetase family. Monomer.

Its subcellular location is the cytoplasm. It catalyses the reaction tRNA(Arg) + L-arginine + ATP = L-arginyl-tRNA(Arg) + AMP + diphosphate. The protein is Arginine--tRNA ligase of Chelativorans sp. (strain BNC1).